The chain runs to 244 residues: 7-cyano-7-deazaguanine synthase (244 aa).

19 to 29 provides a ligand contact to ATP; sequence FSGGQDSTTCL. C207, C222, C225, and C228 together coordinate Zn(2+).

This sequence belongs to the QueC family. Requires Zn(2+) as cofactor.

It catalyses the reaction 7-carboxy-7-deazaguanine + NH4(+) + ATP = 7-cyano-7-deazaguanine + ADP + phosphate + H2O + H(+). It functions in the pathway purine metabolism; 7-cyano-7-deazaguanine biosynthesis. Functionally, catalyzes the ATP-dependent conversion of 7-carboxy-7-deazaguanine (CDG) to 7-cyano-7-deazaguanine (preQ(0)). The protein is 7-cyano-7-deazaguanine synthase of Bordetella avium (strain 197N).